The primary structure comprises 246 residues: Phosducin (246 aa).

Positions 1-14 (MEEAASQSLEEDFE) are enriched in acidic residues. The interval 1 to 70 (MEEAASQSLE…DKDSKERMSR (70 aa)) is disordered. In terms of domain architecture, Phosducin spans 1 to 246 (MEEAASQSLE…QTNTEDEDIE (246 aa)). A compositionally biased stretch (basic and acidic residues) spans 58-69 (SRDDKDSKERMS). Position 73 is a phosphoserine; by PKA (Ser73). The interval 111–246 (YGFVYELETG…QTNTEDEDIE (136 aa)) is thioredoxin fold.

This sequence belongs to the phosducin family. As to quaternary structure, interacts with CRX. Forms a complex with the beta and gamma subunits of the GTP-binding protein, transducin. Post-translationally, light-induced changes in cyclic nucleotide levels modulate the phosphorylation of this protein by cAMP kinase.

Its subcellular location is the cytoplasm. The protein resides in the cytosol. It localises to the nucleus. The protein localises to the cell projection. It is found in the cilium. Its subcellular location is the photoreceptor outer segment. The protein resides in the photoreceptor inner segment. In terms of biological role, inhibits the transcriptional activation activity of the cone-rod homeobox CRX. May participate in the regulation of visual phototransduction or in the integration of photoreceptor metabolism. This chain is Phosducin (Pdc), found in Rattus norvegicus (Rat).